The following is a 169-amino-acid chain: S-ribosylhomocysteine lyase (169 aa).

Residues His54, His58, and Cys128 each coordinate Fe cation.

Belongs to the LuxS family. As to quaternary structure, homodimer. Fe cation is required as a cofactor.

It carries out the reaction S-(5-deoxy-D-ribos-5-yl)-L-homocysteine = (S)-4,5-dihydroxypentane-2,3-dione + L-homocysteine. Its function is as follows. Involved in the synthesis of autoinducer 2 (AI-2) which is secreted by bacteria and is used to communicate both the cell density and the metabolic potential of the environment. The regulation of gene expression in response to changes in cell density is called quorum sensing. Catalyzes the transformation of S-ribosylhomocysteine (RHC) to homocysteine (HC) and 4,5-dihydroxy-2,3-pentadione (DPD). This Shewanella sp. (strain MR-7) protein is S-ribosylhomocysteine lyase.